The primary structure comprises 345 residues: G-protein coupled receptor family C group 5 member D (345 aa).

Residues 1–27 (MYKDCIESTGDYFLLCDAEGPWGIILE) are Extracellular-facing. The helical transmembrane segment at 28-48 (SLAILGIVVTILLLLAFLFLM) threads the bilayer. Residues 49-63 (RKIQDCSQWNVLPTQ) are Cytoplasmic-facing. The chain crosses the membrane as a helical span at residues 64–84 (LLFLLSVLGLFGLAFAFIIEL). At 85 to 93 (NQQTAPVRY) the chain is on the extracellular side. Residues 94–114 (FLFGVLFALCFSCLLAHASNL) form a helical membrane-spanning segment. The Cytoplasmic portion of the chain corresponds to 115-123 (VKLVRGCVS). The helical transmembrane segment at 124–144 (FSWTTILCIAIGCSLLQIIIA) threads the bilayer. At 145–167 (TEYVTLIMTRGMMFVNMTPCQLN) the chain is on the extracellular side. The helical transmembrane segment at 168-188 (VDFVVLLVYVLFLMALTFFVS) threads the bilayer. At 189–204 (KATFCGPCENWKQHGR) the chain is on the cytoplasmic side. A helical transmembrane segment spans residues 205–225 (LIFITVLFSIIIWVVWISMLL). At 226–239 (RGNPQFQRQPQWDD) the chain is on the extracellular side. Residues 240-260 (PVVCIALVTNAWVFLLLYIVP) form a helical membrane-spanning segment. The Cytoplasmic portion of the chain corresponds to 261–345 (ELCILYRSCR…LSPQQDAGGV (85 aa)).

The protein belongs to the G-protein coupled receptor 3 family. In terms of assembly, homodimer. As to expression, widely expressed in the peripheral system. Expression pattern is high in pancreas, medium in kidney, small intestine, spleen and testis, low in lung, colon, leukocyte, prostate and thymus and not detectable in brain, heart, liver, placenta, skeletal muscle and ovary.

The protein resides in the cell membrane. In terms of biological role, G-protein coupled receptor involved in hard keratin expression and likely plays a role in the development of hair and nails. The chain is G-protein coupled receptor family C group 5 member D (GPRC5D) from Homo sapiens (Human).